The following is a 150-amino-acid chain: Large ribosomal subunit protein bL9 (150 aa).

The protein belongs to the bacterial ribosomal protein bL9 family.

Functionally, binds to the 23S rRNA. This is Large ribosomal subunit protein bL9 from Streptococcus pyogenes serotype M5 (strain Manfredo).